A 222-amino-acid chain; its full sequence is Ras-related protein Rab-21 (222 aa).

N-acetylalanine is present on Ala-2. The GTP site is built by Gly-26, Gly-29, Lys-30, Thr-31, Ser-32, Asn-43, Asp-44, His-46, Thr-48, and Thr-49. Thr-31 contributes to the Mg(2+) binding site. Residues 41–54 (KFNDKHITTLQASF) carry the Switch 1 motif. Mg(2+)-binding residues include Thr-49 and Asp-72. Positions 74 to 92 (AGQERFHALGPIYYRDSNG) match the Switch 2 motif. GTP-binding residues include Gly-75, Asn-130, Lys-131, Asp-133, Ala-161, and Lys-162. Residues Cys-218 and Cys-219 are each lipidated (S-geranylgeranyl cysteine). Cys-219 carries the cysteine methyl ester modification. The propeptide at 220 to 222 (SSG) is removed in mature form.

The protein belongs to the small GTPase superfamily. Rab family. In terms of assembly, interacts with the cytoplasmic tail of integrins ITGA1, ITGA2, ITGA5, ITGA6, ITGA11 and ITGB1; this interaction is dependent upon its GDP/GTP cycle. Interacts with RABGEF1 (via VPS9 domain). Interacts with ANKRD27. Interacts with VAMP7. Interacts (in GTP-bound form) with VAMP8 in response to starvation; the interaction probably regulates VAMP8 endolysosomal trafficking. Interacts (active GTP-bound form) with TMED10; the interaction is indirect and regulates TMED10 abundance and localization at the Golgi. Mg(2+) is required as a cofactor.

The protein localises to the endoplasmic reticulum membrane. It is found in the golgi apparatus. The protein resides in the trans-Golgi network. Its subcellular location is the golgi apparatus membrane. It localises to the early endosome membrane. The protein localises to the cytoplasmic vesicle membrane. It is found in the cleavage furrow. The protein resides in the cell projection. Its subcellular location is the neuron projection. It catalyses the reaction GTP + H2O = GDP + phosphate + H(+). With respect to regulation, regulated by guanine nucleotide exchange factors (GEFs) including ANKRD27 and RABGEF1, which promote the exchange of bound GDP for free GTP. Regulated by GTPase activating proteins (GAPs) which increase the GTP hydrolysis activity. Inhibited by GDP dissociation inhibitors (GDIs). The small GTPases Rab are key regulators of intracellular membrane trafficking, from the formation of transport vesicles to their fusion with membranes. Rabs cycle between an inactive GDP-bound form and an active GTP-bound form that is able to recruit to membranes different sets of downstream effectors directly responsible for vesicle formation, movement, tethering and fusion. RAB21 is involved in membrane trafficking control. Regulates integrin internalization and recycling, but does not influence the traffic of endosomally translocated receptors in general. As a result, may regulate cell adhesion and migration. During the mitosis of adherent cells, controls the endosomal trafficking of integrins which is required for the successful completion of cytokinesis. Involved in neurite growth. Following SBF2/MTMT13-mediated activation in response to starvation-induced autophagy, binds to and regulates SNARE protein VAMP8 endolysosomal transport required for SNARE-mediated autophagosome-lysosome fusion. Modulates protein levels of the cargo receptors TMED2 and TMED10, and required for appropriate Golgi localization of TMED10. The polypeptide is Ras-related protein Rab-21 (Mus musculus (Mouse)).